Here is a 275-residue protein sequence, read N- to C-terminus: NH(3)-dependent NAD(+) synthetase (275 aa).

Position 47-54 (47-54 (GMSGGQDS)) interacts with ATP. Mg(2+) is bound at residue aspartate 53. Arginine 141 contacts deamido-NAD(+). Threonine 161 provides a ligand contact to ATP. Glutamate 166 provides a ligand contact to Mg(2+). Positions 174 and 181 each coordinate deamido-NAD(+). ATP contacts are provided by lysine 190 and threonine 212. Position 261 to 262 (261 to 262 (HK)) interacts with deamido-NAD(+).

Belongs to the NAD synthetase family. Homodimer.

The catalysed reaction is deamido-NAD(+) + NH4(+) + ATP = AMP + diphosphate + NAD(+) + H(+). Its pathway is cofactor biosynthesis; NAD(+) biosynthesis; NAD(+) from deamido-NAD(+) (ammonia route): step 1/1. Catalyzes the ATP-dependent amidation of deamido-NAD to form NAD. Uses ammonia as a nitrogen source. The chain is NH(3)-dependent NAD(+) synthetase from Oceanobacillus iheyensis (strain DSM 14371 / CIP 107618 / JCM 11309 / KCTC 3954 / HTE831).